The chain runs to 129 residues: 3-aminoacrylate deaminase RutC (129 aa).

This sequence belongs to the RutC family.

It catalyses the reaction (Z)-3-aminoacrylate + H2O + H(+) = 3-oxopropanoate + NH4(+). In terms of biological role, involved in pyrimidine catabolism. Catalyzes the deamination of 3-aminoacrylate to malonic semialdehyde, a reaction that can also occur spontaneously. RutC may facilitate the reaction and modulate the metabolic fitness, rather than catalyzing essential functions. The polypeptide is 3-aminoacrylate deaminase RutC (Caulobacter vibrioides (strain ATCC 19089 / CIP 103742 / CB 15) (Caulobacter crescentus)).